Reading from the N-terminus, the 868-residue chain is Leucine--tRNA ligase (868 aa).

The short motif at 42-52 (PYPSGKLHMGH) is the 'HIGH' region element. Residues 627-631 (KMSKS) carry the 'KMSKS' region motif. Residue K630 coordinates ATP.

This sequence belongs to the class-I aminoacyl-tRNA synthetase family.

It is found in the cytoplasm. The catalysed reaction is tRNA(Leu) + L-leucine + ATP = L-leucyl-tRNA(Leu) + AMP + diphosphate. This chain is Leucine--tRNA ligase, found in Pseudomonas syringae pv. tomato (strain ATCC BAA-871 / DC3000).